A 313-amino-acid chain; its full sequence is MNIMDYENSKRFRRNKLEEDNISDDEMENEEWDEGFGAEEFISFDEELPEYDENNPTPTCFSRWFDTQKYHYHRKIPLPIQLPKEDKKQPKQHPLKWAKFTDETEIESTMVVIGKIPLTRKRNVTNENVSFQGVANEIVVSKNIEGTKKKRNYAFTTYKNKNKKITKPIQNQLCFSITKGIECPHYSCTYIHNYSQIEHCQYNNQCRFALQVDDELYLQNNNGKCLKRHMYESIESYLLRLEIPIYNCTSLVLQVNPHVHSDCNILRRVLQNAKNCRVAPLIWQKKKVLELKTSDDSDSENNDEDDDWKIDLF.

A C3H1-type zinc finger spans residues C174–H199. A disordered region spans residues S294–F313. Over residues D296–F313 the composition is skewed to acidic residues.

This sequence belongs to the IIV-6 077L family.

This is Putative zinc finger protein 077L from Invertebrate iridescent virus 6 (IIV-6).